The following is a 414-amino-acid chain: Tyrosine--tRNA ligase (414 aa).

Residue tyrosine 38 participates in L-tyrosine binding. Positions 43-52 (PTAISLHLGN) match the 'HIGH' region motif. L-tyrosine contacts are provided by tyrosine 165 and glutamine 169. The 'KMSKS' region signature appears at 227–231 (KIGKS). Lysine 230 is a binding site for ATP. An S4 RNA-binding domain is found at 349-413 (DDLFLTLVDS…KGKKQYWVIY (65 aa)).

Belongs to the class-I aminoacyl-tRNA synthetase family. TyrS type 1 subfamily. In terms of assembly, homodimer.

The protein localises to the cytoplasm. The enzyme catalyses tRNA(Tyr) + L-tyrosine + ATP = L-tyrosyl-tRNA(Tyr) + AMP + diphosphate + H(+). Catalyzes the attachment of tyrosine to tRNA(Tyr) in a two-step reaction: tyrosine is first activated by ATP to form Tyr-AMP and then transferred to the acceptor end of tRNA(Tyr). This chain is Tyrosine--tRNA ligase, found in Mycoplasmopsis pulmonis (strain UAB CTIP) (Mycoplasma pulmonis).